The chain runs to 223 residues: F420-dependent NADP reductase (223 aa).

NADP(+)-binding positions include 9–12 (TGDQ), 30–31 (SR), lysine 35, leucine 75, and valine 101.

The protein belongs to the F420-dependent NADP reductase family.

The catalysed reaction is reduced coenzyme F420-(gamma-L-Glu)(n) + NADP(+) = oxidized coenzyme F420-(gamma-L-Glu)(n) + NADPH + 2 H(+). Catalyzes the reduction of NADP(+) with F420H(2) via hydride transfer, and the reverse reaction, i.e. the reduction of F420 with NADPH. Probably functions in the regeneration of NADPH required in biosynthetic reactions. The sequence is that of F420-dependent NADP reductase (fno) from Methanocaldococcus jannaschii (strain ATCC 43067 / DSM 2661 / JAL-1 / JCM 10045 / NBRC 100440) (Methanococcus jannaschii).